A 98-amino-acid polypeptide reads, in one-letter code: NADH-ubiquinone oxidoreductase chain 4L (98 aa).

3 helical membrane passes run 1-21, 29-49, and 61-81; these read MTMV…GLLM, SLLC…VTIL, and IILL…LVMV.

This sequence belongs to the complex I subunit 4L family. Core subunit of respiratory chain NADH dehydrogenase (Complex I) which is composed of 45 different subunits.

It is found in the mitochondrion inner membrane. It carries out the reaction a ubiquinone + NADH + 5 H(+)(in) = a ubiquinol + NAD(+) + 4 H(+)(out). Core subunit of the mitochondrial membrane respiratory chain NADH dehydrogenase (Complex I) which catalyzes electron transfer from NADH through the respiratory chain, using ubiquinone as an electron acceptor. Part of the enzyme membrane arm which is embedded in the lipid bilayer and involved in proton translocation. The sequence is that of NADH-ubiquinone oxidoreductase chain 4L (MT-ND4L) from Neomonachus schauinslandi (Hawaiian monk seal).